The following is a 118-amino-acid chain: Basic phospholipase A2 4 (118 aa).

Intrachain disulfides connect Cys-11/Cys-71, Cys-27/Cys-117, Cys-29/Cys-45, Cys-44/Cys-98, Cys-51/Cys-91, Cys-60/Cys-84, and Cys-78/Cys-89. Ca(2+)-binding residues include Tyr-28, Gly-30, and Gly-32. His-48 is a catalytic residue. A Ca(2+)-binding site is contributed by Asp-49. Asp-92 is an active-site residue.

This sequence belongs to the phospholipase A2 family. Group I subfamily. D49 sub-subfamily. Monomer. The cofactor is Ca(2+). In terms of tissue distribution, expressed by the venom gland.

It is found in the secreted. The catalysed reaction is a 1,2-diacyl-sn-glycero-3-phosphocholine + H2O = a 1-acyl-sn-glycero-3-phosphocholine + a fatty acid + H(+). PLA2 catalyzes the calcium-dependent hydrolysis of the 2-acyl groups in 3-sn-phosphoglycerides. This Laticauda semifasciata (Black-banded sea krait) protein is Basic phospholipase A2 4.